The sequence spans 551 residues: Medium/long-chain-fatty-acid--CoA/3-oxocholest-4-en-26-oate--CoA ligase (551 aa).

Residues 172-180 (TGGTTGFPK), D417, R432, and K523 contribute to the ATP site.

Belongs to the ATP-dependent AMP-binding enzyme family.

The catalysed reaction is a medium-chain fatty acid + ATP + CoA = a medium-chain fatty acyl-CoA + AMP + diphosphate. It carries out the reaction a long-chain fatty acid + ATP + CoA = a long-chain fatty acyl-CoA + AMP + diphosphate. The enzyme catalyses (25S)-3-oxocholest-4-en-26-oate + ATP + CoA = (25S)-3-oxocholest-4-en-26-oyl-CoA + AMP + diphosphate. The protein operates within lipid metabolism; fatty acid biosynthesis. Its pathway is steroid metabolism; cholesterol metabolism. Functionally, plays an essential role in degradation of the side chains of C-24 branched-chain sterols. Not essential for degradation of straight chain sterols such as cholesterol. Catalyzes the activation of medium/long-chain fatty acids as acyl-coenzyme A (acyl-CoA), which are then transferred to the multifunctional polyketide synthase (PKS) type III for further chain extension. May be involved in the degradation of cholesterol via the degradation of the side chains of C-24 branched-chain sterols. This is Medium/long-chain-fatty-acid--CoA/3-oxocholest-4-en-26-oate--CoA ligase from Mycolicibacterium smegmatis (strain ATCC 700084 / mc(2)155) (Mycobacterium smegmatis).